Reading from the N-terminus, the 520-residue chain is Ubiquitin carboxyl-terminal hydrolase MINDY-1 (520 aa).

A disordered region spans residues 1-155; that stretch reads MADSCADTVD…ENEGAVAGAM (155 aa). Residues 26 to 37 show a composition bias toward basic and acidic residues; sequence KNEDLEQTKPQK. Over residues 43 to 54 the composition is skewed to polar residues; sequence TEESSACVSQIK. Low complexity predominate over residues 77 to 86; it reads ATSSASVTSK. Composition is skewed to polar residues over residues 93–112 and 132–146; these read VINS…SFSM and SAKS…SVQE. Catalysis depends on C189, which acts as the Nucleophile. Catalysis depends on H371, which acts as the Proton acceptor. 2 disordered regions span residues 422–441 and 467–520; these read SQKP…QQMQ and ELAR…CCIL. A ubiquitin-binding domain (UBD) region spans residues 441–479; sequence QIDQDYLVAMSLQQEQGEAPGPLSDLELARQLQQEEYQQ. Residues 469 to 498 are compositionally biased toward low complexity; that stretch reads ARQLQQEEYQQPQTQQQQQQQPSAGQMRGQ. Basic and acidic residues predominate over residues 511–520; the sequence is KKEETDCCIL.

This sequence belongs to the MINDY deubiquitinase family. FAM63 subfamily.

It catalyses the reaction Thiol-dependent hydrolysis of ester, thioester, amide, peptide and isopeptide bonds formed by the C-terminal Gly of ubiquitin (a 76-residue protein attached to proteins as an intracellular targeting signal).. Its function is as follows. Hydrolase that can specifically remove 'Lys-48'-linked conjugated ubiquitin from proteins. May play a regulatory role at the level of protein turnover. The sequence is that of Ubiquitin carboxyl-terminal hydrolase MINDY-1 (mindy1) from Danio rerio (Zebrafish).